Consider the following 485-residue polypeptide: Rhamnulokinase (485 aa).

An ATP-binding site is contributed by 11–15; it reads ASSGR. Substrate is bound by residues A79 and 234–236; that span reads HDT. The active-site Proton acceptor is D235. T257 provides a ligand contact to ATP. N294 provides a ligand contact to substrate. ATP-binding residues include Q302 and G401.

The protein belongs to the rhamnulokinase family. The cofactor is Mg(2+).

It catalyses the reaction L-rhamnulose + ATP = L-rhamnulose 1-phosphate + ADP + H(+). The protein operates within carbohydrate degradation; L-rhamnose degradation; glycerone phosphate from L-rhamnose: step 2/3. Its function is as follows. Involved in the catabolism of L-rhamnose (6-deoxy-L-mannose). Catalyzes the transfer of the gamma-phosphate group from ATP to the 1-hydroxyl group of L-rhamnulose to yield L-rhamnulose 1-phosphate. The sequence is that of Rhamnulokinase from Ligilactobacillus salivarius (strain UCC118) (Lactobacillus salivarius).